A 309-amino-acid chain; its full sequence is 2-dehydro-3-deoxygluconokinase (309 aa).

Residues 28 to 32 (GDTLN), Tyr-88, 102 to 104 (YWR), and Arg-170 contribute to the substrate site. Residues 168–170 (NYR), 228–233 (KRGADS), and 261–264 (AAGD) each bind ATP. Residue Asp-264 coordinates substrate. Asp-264 functions as the Proton acceptor in the catalytic mechanism.

Belongs to the carbohydrate kinase PfkB family.

The catalysed reaction is 2-dehydro-3-deoxy-D-gluconate + ATP = 2-dehydro-3-deoxy-6-phospho-D-gluconate + ADP + H(+). Its pathway is carbohydrate acid metabolism; 2-dehydro-3-deoxy-D-gluconate degradation; D-glyceraldehyde 3-phosphate and pyruvate from 2-dehydro-3-deoxy-D-gluconate: step 1/2. Functionally, catalyzes the phosphorylation of 2-keto-3-deoxygluconate (KDG) to produce 2-keto-3-deoxy-6-phosphogluconate (KDPG). In Escherichia coli (strain K12), this protein is 2-dehydro-3-deoxygluconokinase (kdgK).